The primary structure comprises 274 residues: MNKTAIALLALLASSVSLAATPWQKITQPVPGSAQSIGSFSNGCIVGADTLPIQSEHYQVMRTDQRRYFGHPDLVMFIQRLSSQVSNLGMGTVLIGDMGMPAGGRFNGGHASHQTGLDVDIFLQLPKTRWTSAQLLRPQALDLVSRDGKHVVSTLWKPEIFSLIKLAAQDKDVTRIFVNPAIKQQLCLDAGTDRDWLRKVRPWFQHRAHMHVRLRCPADSLECEDQPLPPPGDGCGAELQSWFEPPKPGTTKPEKKTPPPLPPSCQALLDEHVI.

The N-terminal stretch at 1–19 (MNKTAIALLALLASSVSLA) is a signal peptide. 3 disulfide bridges follow: C44–C265, C187–C235, and C216–C223. The Zn(2+) site is built by H110, H113, D120, D147, H150, and H211. The interval 227-274 (PLPPPGDGCGAELQSWFEPPKPGTTKPEKKTPPPLPPSCQALLDEHVI) is disordered.

The protein belongs to the peptidase M74 family. As to quaternary structure, dimer. It depends on Zn(2+) as a cofactor.

It is found in the periplasm. Its function is as follows. Murein endopeptidase that cleaves the D-alanyl-meso-2,6-diamino-pimelyl amide bond that connects peptidoglycan strands. Likely plays a role in the removal of murein from the sacculus. This Shigella dysenteriae serotype 1 (strain Sd197) protein is Penicillin-insensitive murein endopeptidase.